A 271-amino-acid polypeptide reads, in one-letter code: MAGLEVLFASAAPAITCTQDALVCFLHWEVVTHGYYALGVGDQPGPNDKKSELLPAGWNNNKDLYVLRYEYKDGSRKLLVKAITVESSMILNVLEYGSQQVADLTLNLDDYIDAEHLGDFHRTYKNSEELRSRIVSGIITPIHEQWEKANVSSPHREFPPATAREVDPLRIPPHHPHTSRQPPWCDPLGPFAVGGEDLDPFGHRRGGMIVDPLRSGFPRALIDPSSGLPNRLPPGAVPPGARFDPFGPIGTSPPGPNPDHLPPPGYDDMYL.

At alanine 2 the chain carries N-acetylalanine. Residues 2–150 are important for homodimerization and interaction with FBXO7; the sequence is AGLEVLFASA…PIHEQWEKAN (149 aa). Serine 153 bears the Phosphoserine mark. An Omega-N-methylarginine modification is found at arginine 205. An Asymmetric dimethylarginine modification is found at arginine 219. A disordered region spans residues 222–271; sequence IDPSSGLPNRLPPGAVPPGARFDPFGPIGTSPPGPNPDHLPPPGYDDMYL. Arginine 231 bears the Omega-N-methylarginine mark. The span at 251–265 shows a compositional bias: pro residues; the sequence is TSPPGPNPDHLPPPG. A Phosphoserine modification is found at serine 252.

It belongs to the proteasome inhibitor PI31 family. As to quaternary structure, monomer and homodimer. Interacts with FBXO7.

It is found in the cytoplasm. The protein resides in the endoplasmic reticulum. In terms of biological role, plays an important role in control of proteasome function. Inhibits the hydrolysis of protein and peptide substrates by the 20S proteasome. Also inhibits the activation of the proteasome by the proteasome regulatory proteins PA700 and PA28. The sequence is that of Proteasome inhibitor PI31 subunit (PSMF1) from Pongo abelii (Sumatran orangutan).